Consider the following 307-residue polypeptide: Manganese-dependent inorganic pyrophosphatase (307 aa).

Positions 7, 11, 13, 66, 88, and 147 each coordinate Mn(2+).

The cofactor is Mn(2+).

It is found in the cytoplasm. It carries out the reaction diphosphate + H2O = 2 phosphate + H(+). The sequence is that of Manganese-dependent inorganic pyrophosphatase (ppaC) from Methanocaldococcus jannaschii (strain ATCC 43067 / DSM 2661 / JAL-1 / JCM 10045 / NBRC 100440) (Methanococcus jannaschii).